The primary structure comprises 304 residues: Bifunctional protein FolD (304 aa).

Residues 170–172 (GRS), Ser-195, and Ile-236 each bind NADP(+).

It belongs to the tetrahydrofolate dehydrogenase/cyclohydrolase family. In terms of assembly, homodimer.

The catalysed reaction is (6R)-5,10-methylene-5,6,7,8-tetrahydrofolate + NADP(+) = (6R)-5,10-methenyltetrahydrofolate + NADPH. It catalyses the reaction (6R)-5,10-methenyltetrahydrofolate + H2O = (6R)-10-formyltetrahydrofolate + H(+). It functions in the pathway one-carbon metabolism; tetrahydrofolate interconversion. Catalyzes the oxidation of 5,10-methylenetetrahydrofolate to 5,10-methenyltetrahydrofolate and then the hydrolysis of 5,10-methenyltetrahydrofolate to 10-formyltetrahydrofolate. This chain is Bifunctional protein FolD, found in Anaplasma phagocytophilum (strain HZ).